An 886-amino-acid chain; its full sequence is Microsomal triacylglycerol transfer protein (886 aa).

The N-terminal stretch at 1–27 is a signal peptide; sequence MENKNKKCLRTLLLLALFLGLLEDGKT. Positions 30–653 constitute a Vitellogenin domain; it reads IAPNSQQIFK…SQASSFKLGI (624 aa). 4 N-linked (GlcNAc...) asparagine glycosylation sites follow: Asn-358, Asn-484, Asn-502, and Asn-616.

The protein localises to the endoplasmic reticulum. The protein resides in the golgi apparatus. The enzyme catalyses a 1,2-diacyl-sn-glycero-3-phosphocholine(in) = a 1,2-diacyl-sn-glycero-3-phosphocholine(out). It carries out the reaction a 1,2-diacyl-sn-glycero-3-phosphoethanolamine(in) = a 1,2-diacyl-sn-glycero-3-phosphoethanolamine(out). In terms of biological role, catalyzes the transport of phospholipids such as phosphatidylethanolamine (1,2-diacyl-sn-glycero-3-phosphoethanolamine) and phosphatidylcholine (1,2-diacyl-sn-glycero-3-phosphocholine) between membranes. Required for the assembly and secretion of plasma lipoproteins that contain apolipoprotein B. This Drosophila melanogaster (Fruit fly) protein is Microsomal triacylglycerol transfer protein.